The primary structure comprises 197 residues: Recombination protein RecR (197 aa).

The C4-type zinc finger occupies 55–70 (CVQCRDFTESEVCAIC). The 96-residue stretch at 78–173 (QQLCVVESPA…RPSRLAQGMP (96 aa)) folds into the Toprim domain.

This sequence belongs to the RecR family.

Its function is as follows. May play a role in DNA repair. It seems to be involved in an RecBC-independent recombinational process of DNA repair. It may act with RecF and RecO. The protein is Recombination protein RecR of Xanthomonas campestris pv. campestris (strain 8004).